The following is a 420-amino-acid chain: Ribosome biogenesis protein WDR12 homolog (420 aa).

The tract at residues 10-92 (VQVHLKTKQE…EDAIEIEYVE (83 aa)) is ubiquitin-like (UBL) domain. 7 WD repeats span residues 104-142 (LHDDWVSAVKARGKWILSGCYDNSLNLWTNKGKHILTIS), 143-185 (GHTA…NAVD), 192-231 (GHERGVDSVSVSPDGLRFATGSWDTMLKVWSAELDDGVEG), 250-288 (GHRESVSAVQWMDATTLLTGSWDYTLKVWDLSLEGIKTE), 290-329 (STNKSIFDASYSKLNRLILTASADKNLRLYDPRTNQGSVV), 335-375 (GHNA…APLY), and 379-417 (GHGDKVLDIDWSNPKYIVSGGVDNTVRVFKSRKALAEDT).

It belongs to the WD repeat WDR12/YTM1 family.

The protein localises to the nucleus. The protein resides in the nucleolus. It localises to the nucleoplasm. Its function is as follows. Required for maturation of ribosomal RNAs and formation of the large ribosomal subunit. This Drosophila sechellia (Fruit fly) protein is Ribosome biogenesis protein WDR12 homolog.